We begin with the raw amino-acid sequence, 606 residues long: Kelch-like protein 41 (606 aa).

Ser3 carries the post-translational modification Phosphoserine. Residues 33-100 (IDCTLKAGDK…LYSASIDLND (68 aa)) form the BTB domain. The region spanning 135–237 (CLAILRLGLL…TEKYFKDHVE (103 aa)) is the BACK domain. Kelch repeat units follow at residues 346–398 (QIYV…EVDD), 399–447 (KIYV…SHKG), 448–495 (MIYC…VHKG), 497–542 (IVIA…SLAG), and 544–599 (LYAI…TRLN).

Interacts with NRAP. Interacts with LASP1. Part of a complex that contains CUL3, RBX1 and KLHL41. In terms of processing, ubiquitinated by E3 ubiquitin ligase complex formed by CUL3 and RBX1 and probably targeted for proteasome-independent degradation. Quinone-induced oxidative stress increases its ubiquitination. In terms of tissue distribution, sarcomeric muscle.

Its subcellular location is the cytoplasm. It localises to the cytoskeleton. The protein localises to the cell projection. It is found in the pseudopodium. The protein resides in the ruffle. Its subcellular location is the myofibril. It localises to the sarcomere. The protein localises to the m line. It is found in the sarcoplasmic reticulum membrane. The protein resides in the endoplasmic reticulum membrane. Functionally, involved in skeletal muscle development and differentiation. Regulates proliferation and differentiation of myoblasts and plays a role in myofibril assembly by promoting lateral fusion of adjacent thin fibrils into mature, wide myofibrils. Required for pseudopod elongation in transformed cells. The chain is Kelch-like protein 41 (KLHL41) from Homo sapiens (Human).